A 159-amino-acid polypeptide reads, in one-letter code: NADH-quinone oxidoreductase subunit B (159 aa).

[4Fe-4S] cluster contacts are provided by Cys-37, Cys-38, Cys-102, and Cys-132.

This sequence belongs to the complex I 20 kDa subunit family. NDH-1 is composed of 14 different subunits. Subunits NuoB, C, D, E, F, and G constitute the peripheral sector of the complex. [4Fe-4S] cluster serves as cofactor.

It localises to the cell inner membrane. It carries out the reaction a quinone + NADH + 5 H(+)(in) = a quinol + NAD(+) + 4 H(+)(out). Functionally, NDH-1 shuttles electrons from NADH, via FMN and iron-sulfur (Fe-S) centers, to quinones in the respiratory chain. Couples the redox reaction to proton translocation (for every two electrons transferred, four hydrogen ions are translocated across the cytoplasmic membrane), and thus conserves the redox energy in a proton gradient. The sequence is that of NADH-quinone oxidoreductase subunit B from Ruthia magnifica subsp. Calyptogena magnifica.